The following is a 209-amino-acid chain: Uracil phosphoribosyltransferase (209 aa).

Residues arginine 79, arginine 104, and 131–139 (DPMLATGGS) each bind 5-phospho-alpha-D-ribose 1-diphosphate. Residues isoleucine 194 and 199 to 201 (GDA) contribute to the uracil site. A 5-phospho-alpha-D-ribose 1-diphosphate-binding site is contributed by aspartate 200.

It belongs to the UPRTase family. Mg(2+) is required as a cofactor.

It catalyses the reaction UMP + diphosphate = 5-phospho-alpha-D-ribose 1-diphosphate + uracil. It functions in the pathway pyrimidine metabolism; UMP biosynthesis via salvage pathway; UMP from uracil: step 1/1. Its activity is regulated as follows. Allosterically activated by GTP. Functionally, catalyzes the conversion of uracil and 5-phospho-alpha-D-ribose 1-diphosphate (PRPP) to UMP and diphosphate. This Lactiplantibacillus plantarum (strain ATCC BAA-793 / NCIMB 8826 / WCFS1) (Lactobacillus plantarum) protein is Uracil phosphoribosyltransferase.